The sequence spans 165 residues: V-type proton ATPase 16 kDa proteolipid subunit (165 aa).

The Lumenal portion of the chain corresponds to 1–10; that stretch reads MSSTFSGDET. Residues 11–33 traverse the membrane as a helical segment; it reads APFFGFLGAAAALVFSCMGAAYG. At 34 to 55 the chain is on the cytoplasmic side; the sequence is TAKSGVGVASMGVMRPELVMKS. A helical transmembrane segment spans residues 56 to 76; that stretch reads IVPVVMAGVLGIYGLIIAVII. Over 77–95 the chain is Lumenal; sequence STGINPKAKSYYLFDGYAH. The chain crosses the membrane as a helical span at residues 96-117; that stretch reads LSSGLACGLAGLSAGMAIGIVG. Over 118–129 the chain is Cytoplasmic; the sequence is DAGVRANAQQPK. The chain crosses the membrane as a helical span at residues 130 to 155; it reads LFVGMILILIFAEALALYGLIVGIIL. The Lumenal portion of the chain corresponds to 156–165; that stretch reads SSRAGQSRAE.

The protein belongs to the V-ATPase proteolipid subunit family. As to quaternary structure, V-ATPase is a heteromultimeric enzyme composed of a peripheral catalytic V1 complex (main components: subunits A, B, C, D, E, and F) attached to an integral membrane V0 proton pore complex (main component: the proteolipid protein; which is present as a hexamer that forms the proton-conducting pore).

The protein localises to the vacuole membrane. Functionally, proton-conducting pore forming subunit of the membrane integral V0 complex of vacuolar ATPase. V-ATPase is responsible for acidifying a variety of intracellular compartments in eukaryotic cells. The sequence is that of V-type proton ATPase 16 kDa proteolipid subunit (CVA16-2) from Gossypium hirsutum (Upland cotton).